The sequence spans 68 residues: Conotoxin phi-MiXXVIIB (68 aa).

The first 29 residues, Met1–Lys29, serve as a signal peptide directing secretion. Residues Glu30 to Arg35 constitute a propeptide that is removed on maturation. 4 cysteine pairs are disulfide-bonded: Cys38–Cys49, Cys42–Cys51, Cys45–Cys56, and Cys50–Cys61. At Pro44 the chain carries 4-hydroxyproline.

It belongs to the conotoxin G2 superfamily. 1 family. As to expression, expressed by the venom duct.

It is found in the secreted. This peptide promotes cell proliferation (EC(50)=17.85 uM) and inhibits apoptosis (EC(50)=2.2 uM). The chain is Conotoxin phi-MiXXVIIB from Conus miles (Soldier cone).